The primary structure comprises 336 residues: Glyceraldehyde-3-phosphate dehydrogenase (336 aa).

NAD(+)-binding positions include 12–13 (RI), aspartate 34, arginine 78, and threonine 121. Residues 151 to 153 (SCT), threonine 182, arginine 199, 212 to 213 (TG), and arginine 235 contribute to the D-glyceraldehyde 3-phosphate site. Cysteine 152 acts as the Nucleophile in catalysis. Asparagine 316 contributes to the NAD(+) binding site.

Belongs to the glyceraldehyde-3-phosphate dehydrogenase family. As to quaternary structure, homotetramer.

It localises to the cytoplasm. The catalysed reaction is D-glyceraldehyde 3-phosphate + phosphate + NAD(+) = (2R)-3-phospho-glyceroyl phosphate + NADH + H(+). It functions in the pathway carbohydrate degradation; glycolysis; pyruvate from D-glyceraldehyde 3-phosphate: step 1/5. Catalyzes the oxidative phosphorylation of glyceraldehyde 3-phosphate (G3P) to 1,3-bisphosphoglycerate (BPG) using the cofactor NAD. The first reaction step involves the formation of a hemiacetal intermediate between G3P and a cysteine residue, and this hemiacetal intermediate is then oxidized to a thioester, with concomitant reduction of NAD to NADH. The reduced NADH is then exchanged with the second NAD, and the thioester is attacked by a nucleophilic inorganic phosphate to produce BPG. In Streptococcus pyogenes serotype M1, this protein is Glyceraldehyde-3-phosphate dehydrogenase (gap).